The sequence spans 597 residues: Aspartate--tRNA(Asp/Asn) ligase (597 aa).

Glutamate 178 contacts L-aspartate. The aspartate stretch occupies residues 202 to 205 (QLFK). Arginine 224 is an L-aspartate binding site. ATP contacts are provided by residues 224 to 226 (RDE) and glutamine 233. Histidine 458 is a binding site for L-aspartate. Glutamate 488 contacts ATP. Arginine 495 lines the L-aspartate pocket. 540–543 (GLDR) contributes to the ATP binding site.

Belongs to the class-II aminoacyl-tRNA synthetase family. Type 1 subfamily. In terms of assembly, homodimer.

It is found in the cytoplasm. It carries out the reaction tRNA(Asx) + L-aspartate + ATP = L-aspartyl-tRNA(Asx) + AMP + diphosphate. Its function is as follows. Aspartyl-tRNA synthetase with relaxed tRNA specificity since it is able to aspartylate not only its cognate tRNA(Asp) but also tRNA(Asn). Reaction proceeds in two steps: L-aspartate is first activated by ATP to form Asp-AMP and then transferred to the acceptor end of tRNA(Asp/Asn). The protein is Aspartate--tRNA(Asp/Asn) ligase of Cyanothece sp. (strain PCC 7425 / ATCC 29141).